Reading from the N-terminus, the 366-residue chain is 3-dehydroquinate synthase (366 aa).

NAD(+)-binding positions include 69 to 74, 103 to 107, 127 to 128, K140, and K149; these read DGEAYK, GVIGD, and TT. Zn(2+) is bound by residues E182, H245, and H262.

The protein belongs to the sugar phosphate cyclases superfamily. Dehydroquinate synthase family. Requires Co(2+) as cofactor. Zn(2+) is required as a cofactor. It depends on NAD(+) as a cofactor.

It is found in the cytoplasm. The enzyme catalyses 7-phospho-2-dehydro-3-deoxy-D-arabino-heptonate = 3-dehydroquinate + phosphate. It functions in the pathway metabolic intermediate biosynthesis; chorismate biosynthesis; chorismate from D-erythrose 4-phosphate and phosphoenolpyruvate: step 2/7. Catalyzes the conversion of 3-deoxy-D-arabino-heptulosonate 7-phosphate (DAHP) to dehydroquinate (DHQ). The polypeptide is 3-dehydroquinate synthase (Pseudomonas fluorescens (strain ATCC BAA-477 / NRRL B-23932 / Pf-5)).